The following is a 438-amino-acid chain: Aspartate--tRNA(Asp/Asn) ligase (438 aa).

Residue glutamate 176 coordinates L-aspartate. Residues 198–201 are aspartate; the sequence is QLYK. Arginine 220 serves as a coordination point for L-aspartate. ATP-binding positions include 220–222, 228–230, and glutamate 361; these read RAE and RHL. Mg(2+) is bound by residues glutamate 361 and serine 364. Serine 364 and arginine 368 together coordinate L-aspartate. 409–412 is an ATP binding site; that stretch reads GADR.

The protein belongs to the class-II aminoacyl-tRNA synthetase family. Type 2 subfamily. Homodimer. Mg(2+) serves as cofactor.

It is found in the cytoplasm. It carries out the reaction tRNA(Asx) + L-aspartate + ATP = L-aspartyl-tRNA(Asx) + AMP + diphosphate. Its function is as follows. Aspartyl-tRNA synthetase with relaxed tRNA specificity since it is able to aspartylate not only its cognate tRNA(Asp) but also tRNA(Asn). Reaction proceeds in two steps: L-aspartate is first activated by ATP to form Asp-AMP and then transferred to the acceptor end of tRNA(Asp/Asn). In Methanococcus maripaludis (strain C6 / ATCC BAA-1332), this protein is Aspartate--tRNA(Asp/Asn) ligase.